We begin with the raw amino-acid sequence, 421 residues long: Gamma-glutamyl phosphate reductase (421 aa).

It belongs to the gamma-glutamyl phosphate reductase family.

The protein localises to the cytoplasm. It catalyses the reaction L-glutamate 5-semialdehyde + phosphate + NADP(+) = L-glutamyl 5-phosphate + NADPH + H(+). The protein operates within amino-acid biosynthesis; L-proline biosynthesis; L-glutamate 5-semialdehyde from L-glutamate: step 2/2. Its function is as follows. Catalyzes the NADPH-dependent reduction of L-glutamate 5-phosphate into L-glutamate 5-semialdehyde and phosphate. The product spontaneously undergoes cyclization to form 1-pyrroline-5-carboxylate. In Brucella abortus (strain 2308), this protein is Gamma-glutamyl phosphate reductase.